A 169-amino-acid chain; its full sequence is Ribosome maturation factor RimP (169 aa).

The protein belongs to the RimP family.

It localises to the cytoplasm. Required for maturation of 30S ribosomal subunits. The chain is Ribosome maturation factor RimP from Coprothermobacter proteolyticus (strain ATCC 35245 / DSM 5265 / OCM 4 / BT).